Reading from the N-terminus, the 376-residue chain is UPF0284 protein glr4139 (376 aa).

The protein belongs to the UPF0284 family.

This chain is UPF0284 protein glr4139, found in Gloeobacter violaceus (strain ATCC 29082 / PCC 7421).